Reading from the N-terminus, the 309-residue chain is NAD kinase (309 aa).

Asp89 (proton acceptor) is an active-site residue. NAD(+)-binding positions include 89–90, 163–164, His174, Arg191, Asp193, and 204–209; these read DG, NE, and TAYALS.

It belongs to the NAD kinase family. A divalent metal cation is required as a cofactor.

It is found in the cytoplasm. It catalyses the reaction NAD(+) + ATP = ADP + NADP(+) + H(+). Functionally, involved in the regulation of the intracellular balance of NAD and NADP, and is a key enzyme in the biosynthesis of NADP. Catalyzes specifically the phosphorylation on 2'-hydroxyl of the adenosine moiety of NAD to yield NADP. This is NAD kinase from Shewanella sp. (strain MR-4).